Here is a 304-residue protein sequence, read N- to C-terminus: tRNA dimethylallyltransferase (304 aa).

Position 10–17 (10–17) interacts with ATP; it reads GPTASGKT. 12 to 17 is a binding site for substrate; sequence TASGKT. 3 interaction with substrate tRNA regions span residues 35–38, 159–163, and 240–245; these read DSAL, QRLSR, and RCVGYR.

It belongs to the IPP transferase family. Monomer. Mg(2+) serves as cofactor.

The enzyme catalyses adenosine(37) in tRNA + dimethylallyl diphosphate = N(6)-dimethylallyladenosine(37) in tRNA + diphosphate. In terms of biological role, catalyzes the transfer of a dimethylallyl group onto the adenine at position 37 in tRNAs that read codons beginning with uridine, leading to the formation of N6-(dimethylallyl)adenosine (i(6)A). In Shewanella sp. (strain W3-18-1), this protein is tRNA dimethylallyltransferase.